A 391-amino-acid polypeptide reads, in one-letter code: Salivary protein TRIO (391 aa).

The first 24 residues, 1–24 (MCRGLSAVLILLVSLSAQLHVVVG), serve as a signal peptide directing secretion. Residue Asn-323 is glycosylated (N-linked (GlcNAc...) asparagine).

In terms of tissue distribution, female salivary gland (at protein level). Female saliva (at protein level). Not detected in female midgut, head and carcass (at protein level). Not detected in male tissues (at protein level).

It localises to the secreted. Its function is as follows. Required for efficient probing on a mammalian host. Alters the local inflammatory response in the host skin following a mosquito bite by suppressing TNF-alpha/TNF expression. (Microbial infection) Contributes to optimal transmission of Plasmodium berghei sporozoites to mice. In terms of biological role, (Microbial infection) Contributes to optimal transmission of Plasmodium falciparum sporozoites to mammalian host. In Anopheles gambiae (African malaria mosquito), this protein is Salivary protein TRIO.